Here is a 203-residue protein sequence, read N- to C-terminus: Holliday junction branch migration complex subunit RuvA (203 aa).

The interval 1-64 (MIGRLRGTLA…EDAQLLYGFI (64 aa)) is domain I. Positions 65-143 (GKRDRDFFRE…AWEVVPSMFA (79 aa)) are domain II. The tract at residues 144-154 (LVPNQPDMPAG) is flexible linker. Residues 155–203 (QVASAESDAVSALISLGYKPQEASKAVSAIKDKNLSSEDMIRRALKGMI) are domain III.

It belongs to the RuvA family. As to quaternary structure, homotetramer. Forms an RuvA(8)-RuvB(12)-Holliday junction (HJ) complex. HJ DNA is sandwiched between 2 RuvA tetramers; dsDNA enters through RuvA and exits via RuvB. An RuvB hexamer assembles on each DNA strand where it exits the tetramer. Each RuvB hexamer is contacted by two RuvA subunits (via domain III) on 2 adjacent RuvB subunits; this complex drives branch migration. In the full resolvosome a probable DNA-RuvA(4)-RuvB(12)-RuvC(2) complex forms which resolves the HJ.

Its subcellular location is the cytoplasm. In terms of biological role, the RuvA-RuvB-RuvC complex processes Holliday junction (HJ) DNA during genetic recombination and DNA repair, while the RuvA-RuvB complex plays an important role in the rescue of blocked DNA replication forks via replication fork reversal (RFR). RuvA specifically binds to HJ cruciform DNA, conferring on it an open structure. The RuvB hexamer acts as an ATP-dependent pump, pulling dsDNA into and through the RuvAB complex. HJ branch migration allows RuvC to scan DNA until it finds its consensus sequence, where it cleaves and resolves the cruciform DNA. This is Holliday junction branch migration complex subunit RuvA from Pseudomonas fluorescens (strain SBW25).